A 314-amino-acid polypeptide reads, in one-letter code: tRNA dimethylallyltransferase (314 aa).

Gly-11 to Thr-18 is a binding site for ATP. Thr-13–Thr-18 contributes to the substrate binding site. Residues Asp-36–Gln-39 are interaction with substrate tRNA.

The protein belongs to the IPP transferase family. Monomer. It depends on Mg(2+) as a cofactor.

The catalysed reaction is adenosine(37) in tRNA + dimethylallyl diphosphate = N(6)-dimethylallyladenosine(37) in tRNA + diphosphate. Its function is as follows. Catalyzes the transfer of a dimethylallyl group onto the adenine at position 37 in tRNAs that read codons beginning with uridine, leading to the formation of N6-(dimethylallyl)adenosine (i(6)A). This Chlamydia muridarum (strain MoPn / Nigg) protein is tRNA dimethylallyltransferase.